The following is a 156-amino-acid chain: Small ribosomal subunit protein uS7 (156 aa).

It belongs to the universal ribosomal protein uS7 family. As to quaternary structure, part of the 30S ribosomal subunit. Contacts proteins S9 and S11.

In terms of biological role, one of the primary rRNA binding proteins, it binds directly to 16S rRNA where it nucleates assembly of the head domain of the 30S subunit. Is located at the subunit interface close to the decoding center, probably blocks exit of the E-site tRNA. The protein is Small ribosomal subunit protein uS7 of Ruminiclostridium cellulolyticum (strain ATCC 35319 / DSM 5812 / JCM 6584 / H10) (Clostridium cellulolyticum).